The following is a 638-amino-acid chain: MESERDMYRQFQDWCLRTYGDSGKTKTVTRKKYERIVQLLNGSESSSTDNAKFKFWVKSKGFQLGQPDEVRGGGGGAKQVLYVPVKTTDGVGVDEKLSLRRVAVVEDFFDIIYSMHVETGPNGEQIRKHAGQKRTYKAISESYAFLPREAVTRFLMSCSECQKRMHLNPDGTDHKDNGKPPTLVTSMIDYNMPITMAYMKHMKLQLLNSQQDEDESSIESDEFDMSDSTRMSAVNSDLSSNLEERMQSPQNLHGQQDDDSAAESFNGNETLGHSSIASGGTHSREMGDSNSDGKTGLEQDEQPLNLSDSPLSAQLTSEYRIDDHNSNGKNKYKNLLISDLKMEREARENGSKSPAHSYSSYDSGKNESVDRGAEDLSLNRGDEDEDDHEDHDDSEKVNETDGVEAERLKAFNMFVRLFVDENLDRMVPISKQPKEKIQAIIDSCRRQFPEYQERARKRIRTYLKSCRRMKRSGFEMSRPIPSHLTSAVAESILASACESESRNAAKRMRLERQQDESAPADKQCKPEATQATYSTSAVPGSQDVLYINGNGTYSYHSYRGLGGGLLNLNDASSSGPTDLSMKRQLATSSGSSSSSNSRPQLSPTEINAVRQLVAGYRESAAFLLRSADELENLILQQN.

Disordered stretches follow at residues 210 to 312 (QQDE…SPLS), 343 to 403 (EREA…TDGV), 503 to 535 (NAAK…TYST), and 573 to 603 (SSGP…QLSP). The segment covering 211 to 225 (QDEDESSIESDEFDM) has biased composition (acidic residues). Composition is skewed to polar residues over residues 229–254 (TRMS…NLHG), 263–281 (ESFN…SGGT), 302–312 (QPLNLSDSPLS), and 351–363 (SKSP…SYDS). Basic and acidic residues-rich tracts occupy residues 364–374 (GKNESVDRGAE), 391–403 (HDDS…TDGV), and 503–515 (NAAK…RQQD). The span at 588–597 (SSGSSSSSNS) shows a compositional bias: low complexity.

As to expression, expressed predominantly in fetal brain, adult brain and testis.

Its subcellular location is the nucleus. The protein resides in the nucleolus. This is Nucleolar protein 4 (NOL4) from Homo sapiens (Human).